We begin with the raw amino-acid sequence, 657 residues long: DNA mismatch repair protein MutL (657 aa).

The protein belongs to the DNA mismatch repair MutL/HexB family.

In terms of biological role, this protein is involved in the repair of mismatches in DNA. It is required for dam-dependent methyl-directed DNA mismatch repair. May act as a 'molecular matchmaker', a protein that promotes the formation of a stable complex between two or more DNA-binding proteins in an ATP-dependent manner without itself being part of a final effector complex. The protein is DNA mismatch repair protein MutL of Streptococcus agalactiae serotype III (strain NEM316).